We begin with the raw amino-acid sequence, 1486 residues long: Chromosome partition protein MukB (1486 aa).

ATP is bound at residue 34 to 41; that stretch reads GGNGAGKS. Coiled coils occupy residues 326–418, 444–480, and 509–603; these read LEAD…QYNQ, LETFQAKELEATEKMLSLEQKMSMAQTAHSQFEQAYQ, and RHLA…RAPV. The tract at residues 666–783 is flexible hinge; sequence PGGSEDQRLN…EVPLFGRAAR (118 aa). 3 coiled-coil regions span residues 835-923, 977-1115, and 1209-1266; these read EAEI…AKLE, EMLS…TAKA, and VEAI…QNVS.

This sequence belongs to the SMC family. MukB subfamily. In terms of assembly, homodimerization via its hinge domain. Binds to DNA via its C-terminal region. Interacts, and probably forms a ternary complex, with MukE and MukF via its C-terminal region. The complex formation is stimulated by calcium or magnesium. Interacts with tubulin-related protein FtsZ.

It localises to the cytoplasm. The protein localises to the nucleoid. In terms of biological role, plays a central role in chromosome condensation, segregation and cell cycle progression. Functions as a homodimer, which is essential for chromosome partition. Involved in negative DNA supercoiling in vivo, and by this means organize and compact chromosomes. May achieve or facilitate chromosome segregation by condensation DNA from both sides of a centrally located replisome during cell division. This is Chromosome partition protein MukB from Escherichia coli O6:H1 (strain CFT073 / ATCC 700928 / UPEC).